Here is an 82-residue protein sequence, read N- to C-terminus: Small ribosomal subunit protein bS16 (82 aa).

It belongs to the bacterial ribosomal protein bS16 family.

The protein is Small ribosomal subunit protein bS16 of Francisella tularensis subsp. tularensis (strain FSC 198).